A 229-amino-acid chain; its full sequence is Nisin biosynthesis regulatory protein NisR (229 aa).

In terms of domain architecture, Response regulatory spans 4–117 (KILIVDDDQE…QLVAKVEANI (114 aa)). A 4-aspartylphosphate modification is found at aspartate 53. Positions 132-229 (EIRRDLGPIT…VRGLGYQWHG (98 aa)) form a DNA-binding region, ompR/PhoB-type.

Post-translationally, phosphorylated by NisK.

In terms of biological role, member of the two-component regulatory system NisK/NisR involved in the regulation of the biosynthesis of lantibiotic nisin. NisR may function as a regulatory protein. The chain is Nisin biosynthesis regulatory protein NisR (nisR) from Lactococcus lactis subsp. lactis (Streptococcus lactis).